The primary structure comprises 367 residues: DNA replication and repair protein RecF (367 aa).

30–37 (GANGSGKT) lines the ATP pocket.

This sequence belongs to the RecF family.

The protein resides in the cytoplasm. Its function is as follows. The RecF protein is involved in DNA metabolism; it is required for DNA replication and normal SOS inducibility. RecF binds preferentially to single-stranded, linear DNA. It also seems to bind ATP. In Pseudomonas fluorescens (strain Pf0-1), this protein is DNA replication and repair protein RecF.